The chain runs to 339 residues: Transmembrane protein 120B (339 aa).

The stretch at 1–77 (MSGQLERCER…ASREEAELVQ (77 aa)) forms a coiled coil. 6 consecutive transmembrane segments (helical) span residues 102 to 124 (GLYL…AKFA), 132 to 152 (FKLY…FVLH), 159 to 179 (VFNF…SILI), 187 to 207 (GWWV…LTWP), 270 to 290 (FLLP…VTLF), and 302 to 322 (QVFV…LTTL).

The protein belongs to the TMEM120 family. Heterooligomer with TMEM120A.

The protein localises to the nucleus inner membrane. Necessary for efficient adipogenesis. Does not show ion channel activity. This chain is Transmembrane protein 120B, found in Homo sapiens (Human).